The following is a 506-amino-acid chain: Maturase K (506 aa).

The protein belongs to the intron maturase 2 family. MatK subfamily.

It localises to the plastid. The protein localises to the chloroplast. Usually encoded in the trnK tRNA gene intron. Probably assists in splicing its own and other chloroplast group II introns. This Melilotus albus (White sweet clover) protein is Maturase K.